The chain runs to 610 residues: GATOR complex protein NPRL3 (610 aa).

The residue at position 437 (Ser-437) is a Phosphoserine. Residues 474–501 (REASEDHSSLASDNIAVQPSSSHKSNFS) are disordered. Residues 482–501 (SLASDNIAVQPSSSHKSNFS) show a composition bias toward polar residues.

The protein belongs to the NPR3 family. In terms of assembly, component of the GATOR complex consisting of mio, Nup44A/Seh1, Im11, Nplr3, Nplr2, Wdr24, Wdr59 and Sec13. Within the GATOR complex, probable component of the GATOR1 subcomplex which is likely composed of Iml1, Nplr2 and Nplr3. Interacts with Nprl2.

The protein localises to the cytoplasm. It localises to the lysosome. Its function is as follows. An essential component of the GATOR subcomplex GATOR1 which functions as an inhibitor of the amino acid-sensing branch of the TORC1 signaling pathway. The two GATOR subcomplexes, GATOR1 and GATOR2, regulate the TORC1 pathway in order to mediate metabolic homeostasis, female gametogenesis and the response to amino acid limitation and complete starvation. The function of GATOR1 in negatively regulating the TORC1 pathway is essential for maintaining baseline levels of TORC1 activity under nutrient rich conditions, and for promoting survival during amino acid or complete starvation by inhibiting TORC1-dependent cell growth and promoting catabolic metabolism and autophagy. In addition, this inhibition of TORC1 is necessary to maintain female fertility under normal conditions and during periods of nutrient stress. GATOR1 and GATOR2 act at different stages of oogenesis to regulate TORC1 in order to control meiotic entry and promote oocyte growth and development. After exactly four mitotic cyst divisions, the GATOR1 complex members (Iml1, Nprl2 and Nprl3) down-regulate TORC1 to slow cellular metabolism and promote the mitotic/meiotic transition. At later stages of oogenesis, the mio and Nup44A components of the GATOR2 complex inhibit GATOR1 and thus activate TORC1 to promote meiotic progression, and drive oocyte growth and development. The protein is GATOR complex protein NPRL3 of Drosophila melanogaster (Fruit fly).